Consider the following 675-residue polypeptide: Probable potassium transport system protein Kup (675 aa).

12 helical membrane-spanning segments follow: residues 12-32 (LGML…PLYV), 55-75 (VSLI…LVAL), 98-118 (WLIF…TLTP), 143-163 (WLVP…QVLG), 170-190 (SFGP…LLNI), 216-236 (MGIF…ALYS), 249-269 (TWPF…AWML), 296-316 (IAMI…LITG), 345-365 (IYIG…VWLF), 374-394 (AYGL…SQWV), 401-421 (FWSL…LVAS), and 428-448 (GGYL…VWFF).

It belongs to the HAK/KUP transporter (TC 2.A.72) family.

The protein resides in the cell membrane. The catalysed reaction is K(+)(in) + H(+)(in) = K(+)(out) + H(+)(out). Functionally, transport of potassium into the cell. Likely operates as a K(+):H(+) symporter. This is Probable potassium transport system protein Kup from Levilactobacillus brevis (strain ATCC 367 / BCRC 12310 / CIP 105137 / JCM 1170 / LMG 11437 / NCIMB 947 / NCTC 947) (Lactobacillus brevis).